The sequence spans 482 residues: Catalase (482 aa).

Positions 1-23 (MSQNKTLTTASGPPVADNQNSRS) are enriched in polar residues. The disordered stretch occupies residues 1-28 (MSQNKTLTTASGPPVADNQNSRSAGPRG). Active-site residues include histidine 55 and asparagine 128. Tyrosine 338 contacts heme. The disordered stretch occupies residues 370 to 395 (SMAFGSNGGAAPNYEPNSYADAPKQA).

It belongs to the catalase family. The cofactor is heme.

It carries out the reaction 2 H2O2 = O2 + 2 H2O. Decomposes hydrogen peroxide into water and oxygen; serves to protect cells from the toxic effects of hydrogen peroxide. The polypeptide is Catalase (cat) (Onchocerca volvulus endobacterium).